Here is a 575-residue protein sequence, read N- to C-terminus: MGFRINTNIGALNAHANSVVNARELDKSLSRLSSGLRINSAADDASGMAIADSLRSQAATLGQAINNGNDAIGILQTADKAMDEQLKILDTIKTKATQAAQDGQSLKTRTMLQADINRLMEELDNIANTTSFNGKQLLSGNFINQEFQIGASSNQTIKATIGATQSSKIGLTRFETGSRISVGGEVQFTLKNYNGIDDFKFQKVVISTSVGTGLGALAEEINKSADQTGVRATFTVETRGMGAVRAGATSEDFAINGVKIGQIEYKDGDANGALVSAINSVKDTTGVEASIDENGKLLLTSREGRGIKIEGNIGRGAFINPNMLENYGRLSLVKNDGKDILISGTNLSAIGFGTGNMISQASVSLRESKGQIDANVADAMGFNSANKGNILGGYSSVSAYMSSTGSGFSSGSGFSVGSGKNYSTGFANTIAISAASQLSAVYNVSAGSGFSSGSNLSQFATMKTSAGNTLGVKDETAGVTTLKGAMAVMDIAETAITNLDQIRADIGSVQNQLQVTINNITVTQVNVKAAESTIRDVDFAAESANFSKYNILAQSGSYAMSQANAVQQNVLKLLQ.

The protein belongs to the bacterial flagellin family. Heteromer of flaA and flaB.

The protein resides in the secreted. It is found in the bacterial flagellum. Flagellin is the subunit protein which polymerizes to form the filaments of bacterial flagella. This Campylobacter jejuni protein is Flagellin B (flaB).